We begin with the raw amino-acid sequence, 1342 residues long: DNA-directed RNA polymerase subunit beta (1342 aa).

Belongs to the RNA polymerase beta chain family. The RNAP catalytic core consists of 2 alpha, 1 beta, 1 beta' and 1 omega subunit. When a sigma factor is associated with the core the holoenzyme is formed, which can initiate transcription.

It catalyses the reaction RNA(n) + a ribonucleoside 5'-triphosphate = RNA(n+1) + diphosphate. Functionally, DNA-dependent RNA polymerase catalyzes the transcription of DNA into RNA using the four ribonucleoside triphosphates as substrates. In Edwardsiella ictaluri (strain 93-146), this protein is DNA-directed RNA polymerase subunit beta.